We begin with the raw amino-acid sequence, 179 residues long: ATP-dependent protease subunit HslV (179 aa).

Residue threonine 6 is part of the active site. Serine 164, cysteine 167, and threonine 170 together coordinate Na(+).

It belongs to the peptidase T1B family. HslV subfamily. A double ring-shaped homohexamer of HslV is capped on each side by a ring-shaped HslU homohexamer. The assembly of the HslU/HslV complex is dependent on binding of ATP.

It localises to the cytoplasm. The catalysed reaction is ATP-dependent cleavage of peptide bonds with broad specificity.. Allosterically activated by HslU binding. Functionally, protease subunit of a proteasome-like degradation complex believed to be a general protein degrading machinery. The sequence is that of ATP-dependent protease subunit HslV from Listeria innocua serovar 6a (strain ATCC BAA-680 / CLIP 11262).